The chain runs to 423 residues: UPF0229 protein VV1_2091 (423 aa).

Residues 81–111 are disordered; sequence QFITGDKIERPKGGQGGGGAGDGDASADGEG. A compositionally biased stretch (gly residues) spans 93-102; that stretch reads GGQGGGGAGD.

It belongs to the UPF0229 family.

The protein is UPF0229 protein VV1_2091 of Vibrio vulnificus (strain CMCP6).